A 304-amino-acid chain; its full sequence is MRLPIFLDTDPGIDDAVAIAAAIFAPELDLQLMTTVAGNVSVEKTTRNALQLLHFWNAEIPLAQGAAVPLVRAPRDAVSVHGESGMAGYDFVEHNRKPLGIPAFLAIRDALMRAPEPVTLVAIGPLTNIALLLSQCPECKPYIRRLVIMGGSAGRGNCTPNAEFNIAADPEAAACVFRSGIEIVMCGLDVTNQAILTPDYLATLPELNRTGKMLHALFSHYRSGSMQSGLRMHDLCAIAWLVRPELFTLKPCFVAVETQGEFTSGTTVVDIDGCLGKPANVKVALDLDVKGFQQWVAEVLALAS.

The active site involves histidine 233.

It belongs to the IUNH family. RihC subfamily.

In terms of biological role, hydrolyzes both purine and pyrimidine ribonucleosides with a broad-substrate specificity. This chain is Non-specific ribonucleoside hydrolase RihC, found in Escherichia coli O139:H28 (strain E24377A / ETEC).